The chain runs to 146 residues: Small ribosomal subunit protein uS13A (146 aa).

Residue Ser2 is modified to N-acetylserine. Lys36 is covalently cross-linked (Glycyl lysine isopeptide (Lys-Gly) (interchain with G-Cter in ubiquitin)). N6-methyllysine; by RKM1 is present on Lys48. Glycyl lysine isopeptide (Lys-Gly) (interchain with G-Cter in ubiquitin) cross-links involve residues Lys49, Lys80, and Lys96.

This sequence belongs to the universal ribosomal protein uS13 family. In terms of assembly, component of the small ribosomal subunit (SSU). Mature yeast ribosomes consist of a small (40S) and a large (60S) subunit. The 40S small subunit contains 1 molecule of ribosomal RNA (18S rRNA) and 33 different proteins (encoded by 57 genes). The large 60S subunit contains 3 rRNA molecules (25S, 5.8S and 5S rRNA) and 46 different proteins (encoded by 81 genes). Post-translationally, N-terminally acetylated by acetyltransferase NatA.

Its subcellular location is the cytoplasm. Functionally, component of the ribosome, a large ribonucleoprotein complex responsible for the synthesis of proteins in the cell. The small ribosomal subunit (SSU) binds messenger RNAs (mRNAs) and translates the encoded message by selecting cognate aminoacyl-transfer RNA (tRNA) molecules. The large subunit (LSU) contains the ribosomal catalytic site termed the peptidyl transferase center (PTC), which catalyzes the formation of peptide bonds, thereby polymerizing the amino acids delivered by tRNAs into a polypeptide chain. The nascent polypeptides leave the ribosome through a tunnel in the LSU and interact with protein factors that function in enzymatic processing, targeting, and the membrane insertion of nascent chains at the exit of the ribosomal tunnel. The polypeptide is Small ribosomal subunit protein uS13A (Saccharomyces cerevisiae (strain ATCC 204508 / S288c) (Baker's yeast)).